The chain runs to 257 residues: Imidazole glycerol phosphate synthase subunit HisF (257 aa).

Catalysis depends on residues D11 and D130.

Belongs to the HisA/HisF family. Heterodimer of HisH and HisF.

The protein resides in the cytoplasm. It carries out the reaction 5-[(5-phospho-1-deoxy-D-ribulos-1-ylimino)methylamino]-1-(5-phospho-beta-D-ribosyl)imidazole-4-carboxamide + L-glutamine = D-erythro-1-(imidazol-4-yl)glycerol 3-phosphate + 5-amino-1-(5-phospho-beta-D-ribosyl)imidazole-4-carboxamide + L-glutamate + H(+). It functions in the pathway amino-acid biosynthesis; L-histidine biosynthesis; L-histidine from 5-phospho-alpha-D-ribose 1-diphosphate: step 5/9. Functionally, IGPS catalyzes the conversion of PRFAR and glutamine to IGP, AICAR and glutamate. The HisF subunit catalyzes the cyclization activity that produces IGP and AICAR from PRFAR using the ammonia provided by the HisH subunit. This chain is Imidazole glycerol phosphate synthase subunit HisF, found in Actinobacillus pleuropneumoniae serotype 7 (strain AP76).